The primary structure comprises 130 residues: Fluoride-specific ion channel FluC (130 aa).

4 helical membrane-spanning segments follow: residues 2–22, 36–56, 71–91, and 100–120; these read GLLL…RFAL, GILL…AFLI, FLLV…SLDI, and IFIA…AVIL. Residues Gly-79 and Thr-82 each coordinate Na(+).

Belongs to the fluoride channel Fluc/FEX (TC 1.A.43) family.

It is found in the cell inner membrane. It catalyses the reaction fluoride(in) = fluoride(out). Na(+) is not transported, but it plays an essential structural role and its presence is essential for fluoride channel function. Functionally, fluoride-specific ion channel. Important for reducing fluoride concentration in the cell, thus reducing its toxicity. This is Fluoride-specific ion channel FluC from Francisella tularensis subsp. mediasiatica (strain FSC147).